We begin with the raw amino-acid sequence, 324 residues long: Phosphate transport system permease protein PstC (324 aa).

6 helical membrane-spanning segments follow: residues 29–49, 87–107, 126–146, 173–193, 235–255, and 291–311; these read LLLT…ALSM, IVTA…IAFF, LLAG…LVPV, PLGI…IPFI, VIGG…AVAF, and SALL…LVIA. The region spanning 83-311 is the ABC transmembrane type-1 domain; it reads IYGTIVTALI…IVTFAVLVIA (229 aa).

The protein belongs to the binding-protein-dependent transport system permease family. CysTW subfamily.

The protein resides in the cell inner membrane. In terms of biological role, part of a binding-protein-dependent transport system for phosphate; probably responsible for the translocation of the substrate across the membrane. The protein is Phosphate transport system permease protein PstC (pstC) of Xylella fastidiosa (strain Temecula1 / ATCC 700964).